The following is a 372-amino-acid chain: tRNA-specific 2-thiouridylase MnmA (372 aa).

Residues 16 to 23 (GMSGGVDS) and M42 contribute to the ATP site. The interval 102-104 (NPD) is interaction with target base in tRNA. The active-site Nucleophile is C107. C107 and C205 are disulfide-bonded. G132 serves as a coordination point for ATP. The interval 155-157 (KDQ) is interaction with tRNA. C205 serves as the catalytic Cysteine persulfide intermediate. The interaction with tRNA stretch occupies residues 317–318 (RY).

This sequence belongs to the MnmA/TRMU family.

The protein localises to the cytoplasm. It carries out the reaction S-sulfanyl-L-cysteinyl-[protein] + uridine(34) in tRNA + AH2 + ATP = 2-thiouridine(34) in tRNA + L-cysteinyl-[protein] + A + AMP + diphosphate + H(+). Functionally, catalyzes the 2-thiolation of uridine at the wobble position (U34) of tRNA, leading to the formation of s(2)U34. In Shewanella sp. (strain W3-18-1), this protein is tRNA-specific 2-thiouridylase MnmA.